We begin with the raw amino-acid sequence, 559 residues long: Chaperonin GroEL 3 (559 aa).

Residues 88 to 92 (DGTTT), Gly-426, and Asp-507 each bind ATP.

The protein belongs to the chaperonin (HSP60) family. Forms a cylinder of 14 subunits composed of two heptameric rings stacked back-to-back. Interacts with the co-chaperonin GroES.

Its subcellular location is the cytoplasm. The catalysed reaction is ATP + H2O + a folded polypeptide = ADP + phosphate + an unfolded polypeptide.. Functionally, together with its co-chaperonin GroES, plays an essential role in assisting protein folding. The GroEL-GroES system forms a nano-cage that allows encapsulation of the non-native substrate proteins and provides a physical environment optimized to promote and accelerate protein folding. The chain is Chaperonin GroEL 3 from Methylococcus capsulatus (strain ATCC 33009 / NCIMB 11132 / Bath).